Consider the following 78-residue polypeptide: Broad mercury transporter MerE (78 aa).

2 helical membrane-spanning segments follow: residues 19–39 (LWGALAVLTCPCHLPILAAVL) and 47–67 (FLGEHWGVAALALTGLFVLAV).

It localises to the cell inner membrane. Its function is as follows. Broad mercury transporter that mediates the transport of both CH(3)Hg(I) and Hg(II) across the membrane. The chain is Broad mercury transporter MerE from Shigella flexneri.